The primary structure comprises 523 residues: Cytochrome b5 reductase 4 (523 aa).

The Cytochrome b5 heme-binding domain maps to 54-130 (LIDVTEEELA…LKECLIGRMA (77 aa)). Heme is bound by residues H89 and H112. Positions 167 to 258 (ESHPWYDWFQ…KEPVSWKSLG (92 aa)) constitute a CS domain. Residues 275 to 387 (LYYRKCRLAS…SNPQGTFSSF (113 aa)) enclose the FAD-binding FR-type domain. FAD contacts are provided by residues 367 to 382 (ENLT…NPQG) and 394 to 426 (DVFL…KAKL).

Belongs to the flavoprotein pyridine nucleotide cytochrome reductase family. It depends on FAD as a cofactor.

It localises to the endoplasmic reticulum. It carries out the reaction 2 Fe(III)-[cytochrome b5] + NADH = 2 Fe(II)-[cytochrome b5] + NAD(+) + H(+). Its function is as follows. NADH-cytochrome b5 reductase involved in endoplasmic reticulum stress response pathway. The chain is Cytochrome b5 reductase 4 (cyb5r4) from Xenopus tropicalis (Western clawed frog).